The chain runs to 477 residues: UDP-N-acetylmuramate--L-alanine ligase (477 aa).

An ATP-binding site is contributed by 112-118; that stretch reads GAHGKTT.

Belongs to the MurCDEF family.

The protein resides in the cytoplasm. The enzyme catalyses UDP-N-acetyl-alpha-D-muramate + L-alanine + ATP = UDP-N-acetyl-alpha-D-muramoyl-L-alanine + ADP + phosphate + H(+). It participates in cell wall biogenesis; peptidoglycan biosynthesis. In terms of biological role, cell wall formation. The sequence is that of UDP-N-acetylmuramate--L-alanine ligase from Delftia acidovorans (strain DSM 14801 / SPH-1).